Consider the following 414-residue polypeptide: EARP and GARP complex-interacting protein 1 (414 aa).

An N-acetylmethionine modification is found at Met1. 4 WD repeats span residues 159 to 199 (TAHG…SQAV), 209 to 249 (KGQL…QIYC), 253 to 293 (AHGQ…EPVK), and 297 to 337 (EHSH…SEPF). The tract at residues 337–362 (FGHLVDDDDISDQEDHRSEEKSKEPL) is disordered. Ser347 is modified (phosphoserine). The span at 349 to 362 (QEDHRSEEKSKEPL) shows a compositional bias: basic and acidic residues. The WD 5 repeat unit spans residues 372–412 (EHEDSVYAVDWSSADPWLFASLSYDGRLVINRVPRALKYHI).

It belongs to the WD repeat EIPR1 family. As to quaternary structure, interacts with two multisubunit tethering complexes: EARP composed of VPS50, VPS51, VPS52 and VPS53 subunits and GARP complex composed of VPS51, VPS52, VPS53 and VPS54 subunits. Interacts with SNAP29.

It is found in the golgi apparatus. The protein localises to the trans-Golgi network. Its function is as follows. Acts as a component of endosomal retrieval machinery that is involved in protein transport from early endosomes to either recycling endosomes or the trans-Golgi network. Mediates the recruitment of Golgi-associated retrograde protein (GARP) complex to the trans-Golgi network and controls early endosome-to-Golgi transport of internalized protein. Promotes the recycling of internalized transferrin receptor (TFRC) to the plasma membrane through interaction with endosome-associated recycling protein (EARP) complex. Controls proper insulin distribution and secretion, and retention of cargo in mature dense core vesicles. Required for the stability of the endosome-associated retrograde protein (EARP) complex subunits and for proper localization and association of EARP with membranes. This Pongo abelii (Sumatran orangutan) protein is EARP and GARP complex-interacting protein 1.